Reading from the N-terminus, the 350-residue chain is Erythronate-4-phosphate dehydrogenase (350 aa).

Residues Ser-45 and Thr-66 each coordinate substrate. NAD(+) is bound by residues Gln-124–Val-125, Asp-144, Ala-203–Arg-205, and Asp-226. Arg-205 is an active-site residue. Glu-231 is an active-site residue. His-248 functions as the Proton donor in the catalytic mechanism. Gly-251 contributes to the NAD(+) binding site.

The protein belongs to the D-isomer specific 2-hydroxyacid dehydrogenase family. PdxB subfamily. As to quaternary structure, homodimer.

Its subcellular location is the cytoplasm. The enzyme catalyses 4-phospho-D-erythronate + NAD(+) = (R)-3-hydroxy-2-oxo-4-phosphooxybutanoate + NADH + H(+). It functions in the pathway cofactor biosynthesis; pyridoxine 5'-phosphate biosynthesis; pyridoxine 5'-phosphate from D-erythrose 4-phosphate: step 2/5. Functionally, catalyzes the oxidation of erythronate-4-phosphate to 3-hydroxy-2-oxo-4-phosphonooxybutanoate. The sequence is that of Erythronate-4-phosphate dehydrogenase from Legionella pneumophila (strain Lens).